Reading from the N-terminus, the 158-residue chain is 2-C-methyl-D-erythritol 2,4-cyclodiphosphate synthase (158 aa).

A divalent metal cation-binding residues include aspartate 10 and histidine 12. Residues 10–12 (DVH) and 36–37 (HS) each bind 4-CDP-2-C-methyl-D-erythritol 2-phosphate. Residue histidine 44 coordinates a divalent metal cation. 4-CDP-2-C-methyl-D-erythritol 2-phosphate is bound by residues 58-60 (DIG), 63-67 (FSDTD), and arginine 144.

This sequence belongs to the IspF family. Homotrimer. It depends on a divalent metal cation as a cofactor.

It catalyses the reaction 4-CDP-2-C-methyl-D-erythritol 2-phosphate = 2-C-methyl-D-erythritol 2,4-cyclic diphosphate + CMP. The protein operates within isoprenoid biosynthesis; isopentenyl diphosphate biosynthesis via DXP pathway; isopentenyl diphosphate from 1-deoxy-D-xylulose 5-phosphate: step 4/6. In terms of biological role, involved in the biosynthesis of isopentenyl diphosphate (IPP) and dimethylallyl diphosphate (DMAPP), two major building blocks of isoprenoid compounds. Catalyzes the conversion of 4-diphosphocytidyl-2-C-methyl-D-erythritol 2-phosphate (CDP-ME2P) to 2-C-methyl-D-erythritol 2,4-cyclodiphosphate (ME-CPP) with a corresponding release of cytidine 5-monophosphate (CMP). This chain is 2-C-methyl-D-erythritol 2,4-cyclodiphosphate synthase, found in Burkholderia vietnamiensis (strain G4 / LMG 22486) (Burkholderia cepacia (strain R1808)).